A 419-amino-acid polypeptide reads, in one-letter code: Transcription regulator lscL (419 aa).

A DNA-binding region (zn(2)-C6 fungal-type) is located at residues 12–35; it reads RIRKVKCDEKKPCCQKCIDTGRTC.

The protein resides in the nucleus. Transcription factor that may coregulate the expression of the gene cluster that mediates the biosynthesis of the lipopeptide antibiotics leucinostatins that show extensive biological activities, including antimalarial, antiviral, antibacterial, antifungal, and antitumor activities, as well as phytotoxic. This chain is Transcription regulator lscL, found in Purpureocillium lilacinum (Paecilomyces lilacinus).